We begin with the raw amino-acid sequence, 244 residues long: MDLGLAGRRALVTGAGKGIGRSTVLALKAAGAQVVAVSRTREDLDDLVRECPGVEPVCVDLADWEATEQALSNVGPVDLLVNNAAVALLQPFLEVTKEACDTSFNVNLRAVIQVSQIVAKGMIARGVPGAIVNVSSQASQRALTNHTVYCSTKGALDMLTKMMALELGPHKIRVNAVNPTVVMTPMGRTNWSDPHKAKAMLDRIPLGKFAEVENVVDTILFLLSNRSGMTTGSTLPVDGGFLAT.

Met1 carries the post-translational modification N-acetylmethionine. Position 11–39 (11–39 (LVTGAGKGIGRSTVLALKAAGAQVVAVSR)) interacts with NADP(+). Arg21 carries the omega-N-methylarginine modification. Ser136 contacts substrate. Tyr149 (proton acceptor) is an active-site residue. Residue Lys153 is part of the active site.

Belongs to the short-chain dehydrogenases/reductases (SDR) family. As to quaternary structure, homotetramer. As to expression, highly expressed in kidney, liver and epididymis. Expressed at intermediate level in lung. Weakly or not expressed in brain, heart, spleen and testis.

It localises to the membrane. Its subcellular location is the apical cell membrane. It catalyses the reaction xylitol + NADP(+) = L-xylulose + NADPH + H(+). Its function is as follows. Catalyzes the NADPH-dependent reduction of several pentoses, tetroses, trioses, alpha-dicarbonyl compounds and L-xylulose. Participates in the uronate cycle of glucose metabolism. May play a role in the water absorption and cellular osmoregulation in the proximal renal tubules by producing xylitol, an osmolyte, thereby preventing osmolytic stress from occurring in the renal tubules. The sequence is that of L-xylulose reductase (Dcxr) from Mus musculus (Mouse).